A 236-amino-acid chain; its full sequence is 2-C-methyl-D-erythritol 4-phosphate cytidylyltransferase (236 aa).

Belongs to the IspD/TarI cytidylyltransferase family. IspD subfamily. In terms of assembly, homodimer.

The catalysed reaction is 2-C-methyl-D-erythritol 4-phosphate + CTP + H(+) = 4-CDP-2-C-methyl-D-erythritol + diphosphate. Its pathway is isoprenoid biosynthesis; isopentenyl diphosphate biosynthesis via DXP pathway; isopentenyl diphosphate from 1-deoxy-D-xylulose 5-phosphate: step 2/6. Catalyzes the formation of 4-diphosphocytidyl-2-C-methyl-D-erythritol from CTP and 2-C-methyl-D-erythritol 4-phosphate (MEP). The chain is 2-C-methyl-D-erythritol 4-phosphate cytidylyltransferase from Salmonella heidelberg (strain SL476).